The chain runs to 334 residues: MIEADRLISAAVINDEESIDRAIRPKLLTEYVGQPHVREQMEIFIQAAKQRGDALDHVLIFGPPGLGKTTLANIIANEMGVNLRTTSGPVLEKAGDLAAMLTNLEPHDVLFIDEIHRLSPVVEEILYPAMEDYQLDIMIGEGPAARSIKLDLPPFTLIGATTRAGSLTSPLRDRFGIVQRLEFYPVADLEHIVSRSAKCLGLELTPEGAHQLARRSRGTPRITNRLLRRVRDFAEVRADGAINGEVAMKALDMLNVDAEGFDFMDRKLLLAVIDKFMGGPVGLDNLAAAIGEERETIEDVLEPYLIQQGFIQRTPRGRIATNHAYKHFGITREE.

The interval 4–184 is large ATPase domain (RuvB-L); it reads ADRLISAAVI…FGIVQRLEFY (181 aa). ATP is bound by residues isoleucine 23, arginine 24, glycine 65, lysine 68, threonine 69, threonine 70, 131 to 133, arginine 174, tyrosine 184, and arginine 221; that span reads EDY. Threonine 69 lines the Mg(2+) pocket. Residues 185-255 form a small ATPAse domain (RuvB-S) region; the sequence is PVADLEHIVS…VAMKALDMLN (71 aa). Positions 258-334 are head domain (RuvB-H); sequence AEGFDFMDRK…YKHFGITREE (77 aa). DNA contacts are provided by arginine 294, arginine 313, and arginine 318.

This sequence belongs to the RuvB family. As to quaternary structure, homohexamer. Forms an RuvA(8)-RuvB(12)-Holliday junction (HJ) complex. HJ DNA is sandwiched between 2 RuvA tetramers; dsDNA enters through RuvA and exits via RuvB. An RuvB hexamer assembles on each DNA strand where it exits the tetramer. Each RuvB hexamer is contacted by two RuvA subunits (via domain III) on 2 adjacent RuvB subunits; this complex drives branch migration. In the full resolvosome a probable DNA-RuvA(4)-RuvB(12)-RuvC(2) complex forms which resolves the HJ.

Its subcellular location is the cytoplasm. It catalyses the reaction ATP + H2O = ADP + phosphate + H(+). Its function is as follows. The RuvA-RuvB-RuvC complex processes Holliday junction (HJ) DNA during genetic recombination and DNA repair, while the RuvA-RuvB complex plays an important role in the rescue of blocked DNA replication forks via replication fork reversal (RFR). RuvA specifically binds to HJ cruciform DNA, conferring on it an open structure. The RuvB hexamer acts as an ATP-dependent pump, pulling dsDNA into and through the RuvAB complex. RuvB forms 2 homohexamers on either side of HJ DNA bound by 1 or 2 RuvA tetramers; 4 subunits per hexamer contact DNA at a time. Coordinated motions by a converter formed by DNA-disengaged RuvB subunits stimulates ATP hydrolysis and nucleotide exchange. Immobilization of the converter enables RuvB to convert the ATP-contained energy into a lever motion, pulling 2 nucleotides of DNA out of the RuvA tetramer per ATP hydrolyzed, thus driving DNA branch migration. The RuvB motors rotate together with the DNA substrate, which together with the progressing nucleotide cycle form the mechanistic basis for DNA recombination by continuous HJ branch migration. Branch migration allows RuvC to scan DNA until it finds its consensus sequence, where it cleaves and resolves cruciform DNA. The polypeptide is Holliday junction branch migration complex subunit RuvB (Yersinia pestis bv. Antiqua (strain Angola)).